Reading from the N-terminus, the 101-residue chain is Small ribosomal subunit protein uS14 (101 aa).

The protein belongs to the universal ribosomal protein uS14 family. Part of the 30S ribosomal subunit. Contacts proteins S3 and S10.

In terms of biological role, binds 16S rRNA, required for the assembly of 30S particles and may also be responsible for determining the conformation of the 16S rRNA at the A site. The protein is Small ribosomal subunit protein uS14 of Cupriavidus necator (strain ATCC 17699 / DSM 428 / KCTC 22496 / NCIMB 10442 / H16 / Stanier 337) (Ralstonia eutropha).